A 264-amino-acid chain; its full sequence is Thymidylate synthase (264 aa).

DUMP is bound at residue R21. Residue H51 participates in (6R)-5,10-methylene-5,6,7,8-tetrahydrofolate binding. A dUMP-binding site is contributed by 126-127 (RR). C146 (nucleophile) is an active-site residue. DUMP contacts are provided by residues 166–169 (RSAD), N177, and 207–209 (HIY). D169 contacts (6R)-5,10-methylene-5,6,7,8-tetrahydrofolate. (6R)-5,10-methylene-5,6,7,8-tetrahydrofolate is bound at residue A263.

The protein belongs to the thymidylate synthase family. Bacterial-type ThyA subfamily. As to quaternary structure, homodimer.

Its subcellular location is the cytoplasm. It catalyses the reaction dUMP + (6R)-5,10-methylene-5,6,7,8-tetrahydrofolate = 7,8-dihydrofolate + dTMP. Its pathway is pyrimidine metabolism; dTTP biosynthesis. Catalyzes the reductive methylation of 2'-deoxyuridine-5'-monophosphate (dUMP) to 2'-deoxythymidine-5'-monophosphate (dTMP) while utilizing 5,10-methylenetetrahydrofolate (mTHF) as the methyl donor and reductant in the reaction, yielding dihydrofolate (DHF) as a by-product. This enzymatic reaction provides an intracellular de novo source of dTMP, an essential precursor for DNA biosynthesis. The polypeptide is Thymidylate synthase (Ruthia magnifica subsp. Calyptogena magnifica).